A 330-amino-acid chain; its full sequence is 2-phospho-L-lactate transferase (330 aa).

Position 49 (Asp49) interacts with 7,8-didemethyl-8-hydroxy-5-deazariboflavin.

This sequence belongs to the CofD family. In terms of assembly, homodimer. The cofactor is Mg(2+).

It catalyses the reaction (2S)-lactyl-2-diphospho-5'-guanosine + 7,8-didemethyl-8-hydroxy-5-deazariboflavin = oxidized coenzyme F420-0 + GMP + H(+). Its pathway is cofactor biosynthesis; coenzyme F420 biosynthesis. In terms of biological role, catalyzes the transfer of the 2-phospholactate moiety from (2S)-lactyl-2-diphospho-5'-guanosine to 7,8-didemethyl-8-hydroxy-5-deazariboflavin (FO) with the formation of oxidized coenzyme F420-0 and GMP. The protein is 2-phospho-L-lactate transferase of Haloarcula marismortui (strain ATCC 43049 / DSM 3752 / JCM 8966 / VKM B-1809) (Halobacterium marismortui).